Reading from the N-terminus, the 62-residue chain is Small ribosomal subunit protein bS21 (62 aa).

Over residues V43 to A52 the composition is skewed to basic and acidic residues. The tract at residues V43–K62 is disordered. The segment covering R53 to K62 has biased composition (basic residues).

Belongs to the bacterial ribosomal protein bS21 family.

The chain is Small ribosomal subunit protein bS21 from Lactiplantibacillus plantarum (strain ATCC BAA-793 / NCIMB 8826 / WCFS1) (Lactobacillus plantarum).